We begin with the raw amino-acid sequence, 227 residues long: Esterase Rv3036c (227 aa).

A helical membrane pass occupies residues 3 to 23 (YLIATAVLVAVVLVGWPAAGA).

It belongs to the RsiV family.

Its subcellular location is the cell membrane. It is found in the secreted. The protein localises to the cell wall. It catalyses the reaction a fatty acid ester + H2O = an aliphatic alcohol + a fatty acid + H(+). It carries out the reaction an acetyl ester + H2O = an aliphatic alcohol + acetate + H(+). The catalysed reaction is a butanoate ester + H2O = an aliphatic alcohol + butanoate + H(+). The enzyme catalyses a hexanoate ester + H2O = an aliphatic alcohol + hexanoate + H(+). It catalyses the reaction a dodecanoate ester + H2O = an aliphatic alcohol + dodecanoate + H(+). It carries out the reaction a tetradecanoate ester + H2O = an aliphatic alcohol + tetradecanoate + H(+). The catalysed reaction is an octanoate ester + H2O = an aliphatic alcohol + octanoate + H(+). In terms of biological role, hydrolyzes ester substrates carbon chain lengths ranging from C2 to C14. In vitro, acetate (C2), butyrate (C4) and caprylate (C6) are hydrolyzed with high efficiency. Has lower activity against laurate (C12), myristate (C14) and caproate (C8), and weak activity against palmitate (C16). This is Esterase Rv3036c from Mycobacterium tuberculosis (strain ATCC 25618 / H37Rv).